Reading from the N-terminus, the 355-residue chain is 3-dehydroquinate synthase (355 aa).

NAD(+) contacts are provided by residues 71-76 (EGEASK), 105-109 (GVVGD), 129-130 (TS), Lys142, and Lys151. Zn(2+) is bound by residues Glu184, His246, and His263.

This sequence belongs to the sugar phosphate cyclases superfamily. Dehydroquinate synthase family. Co(2+) serves as cofactor. Zn(2+) is required as a cofactor. The cofactor is NAD(+).

The protein localises to the cytoplasm. The enzyme catalyses 7-phospho-2-dehydro-3-deoxy-D-arabino-heptonate = 3-dehydroquinate + phosphate. It participates in metabolic intermediate biosynthesis; chorismate biosynthesis; chorismate from D-erythrose 4-phosphate and phosphoenolpyruvate: step 2/7. Catalyzes the conversion of 3-deoxy-D-arabino-heptulosonate 7-phosphate (DAHP) to dehydroquinate (DHQ). This Streptococcus sanguinis (strain SK36) protein is 3-dehydroquinate synthase.